A 322-amino-acid chain; its full sequence is Malate dehydrogenase (322 aa).

Residues 10–15 and Asp34 contribute to the NAD(+) site; that span reads GSGQIG. The substrate site is built by Arg83 and Arg89. NAD(+) is bound by residues Asn96 and 119–121; that span reads ITN. The substrate site is built by Asn121 and Arg152. Residue His176 is the Proton acceptor of the active site.

Belongs to the LDH/MDH superfamily. MDH type 3 family.

It carries out the reaction (S)-malate + NAD(+) = oxaloacetate + NADH + H(+). Catalyzes the reversible oxidation of malate to oxaloacetate. This Rhodopseudomonas palustris (strain HaA2) protein is Malate dehydrogenase.